Here is a 201-residue protein sequence, read N- to C-terminus: Small ribosomal subunit protein uS4 (201 aa).

Residues 1-45 are disordered; the sequence is MARYTGPLTKKSRRLGTDLVGNDKSFERRPYPPGVHGRGRTKDSE. The S4 RNA-binding domain maps to 91 to 157; that stretch reads SRLDNVVYRA…PPIVIARETF (67 aa).

This sequence belongs to the universal ribosomal protein uS4 family. Part of the 30S ribosomal subunit. Contacts protein S5. The interaction surface between S4 and S5 is involved in control of translational fidelity.

In terms of biological role, one of the primary rRNA binding proteins, it binds directly to 16S rRNA where it nucleates assembly of the body of the 30S subunit. Functionally, with S5 and S12 plays an important role in translational accuracy. The sequence is that of Small ribosomal subunit protein uS4 from Cutibacterium acnes (strain DSM 16379 / KPA171202) (Propionibacterium acnes).